The chain runs to 119 residues: Large ribosomal subunit protein bL20 (119 aa).

This sequence belongs to the bacterial ribosomal protein bL20 family.

In terms of biological role, binds directly to 23S ribosomal RNA and is necessary for the in vitro assembly process of the 50S ribosomal subunit. It is not involved in the protein synthesizing functions of that subunit. In Dechloromonas aromatica (strain RCB), this protein is Large ribosomal subunit protein bL20.